The following is a 508-amino-acid chain: Probable metalloreductase AIM14 (508 aa).

Helical transmembrane passes span 18 to 38 (LPYGYYVLGVIVFYTIFLIVM), 70 to 90 (PLLLLLVFVPFIHKYSLVAYI), 100 to 120 (LSYVLVILNVLLTLRPANPIL), 137 to 157 (FVTVIGIIHGIGFIVKWSLDP), 168 to 188 (LFNFIGVIAFVPLFILMFASV), 198 to 218 (SFYVIHQLGQWAMVFLVPIHA), 222 to 242 (VTVPYFFILLALYIWRGISYI), and 347 to 367 (VAIVVGGSGISFGLSIFKYLQ). The 118-residue stretch at 97–214 (LGRLSYVLVI…LGQWAMVFLV (118 aa)) folds into the Ferric oxidoreductase domain. The FAD-binding FR-type domain maps to 241-361 (YIYYSTTVNV…GGSGISFGLS (121 aa)).

It belongs to the ferric reductase (FRE) family. AIM14 subfamily.

The protein resides in the membrane. Probable cell surface metalloreductase. May be involved in iron or copper homeostasis. This is Probable metalloreductase AIM14 (AIM14) from Kluyveromyces lactis (strain ATCC 8585 / CBS 2359 / DSM 70799 / NBRC 1267 / NRRL Y-1140 / WM37) (Yeast).